A 162-amino-acid chain; its full sequence is Putative ripening-related protein 7 (162 aa).

Residues 1–30 form the signal peptide; the sequence is MAAAAASTKIVAVVVAVLLAILEMPSCAVA.

The protein belongs to the kiwellin family.

It is found in the secreted. This is Putative ripening-related protein 7 from Oryza sativa subsp. japonica (Rice).